A 367-amino-acid polypeptide reads, in one-letter code: Heme A synthase (367 aa).

Helical transmembrane passes span 26 to 46, 111 to 131, 139 to 159, 174 to 194, and 212 to 232; these read IRGWLAVVLFALFALVIVGGA, LLARSIGVIFALPLLFFWLTG, LPLLGILALGGFQGFIGWWMV, LATHLVIACLIFAACMWIYRG, and AGIIAAMSLFQIYLGALVAGL. Position 274 (His-274) interacts with heme. 3 helical membrane-spanning segments follow: residues 276–296, 305–325, and 327–347; these read AGAYLLFALAFAHMVVSLRAA, SVLLFVLLTVQAAIGITTLLL, and VPIVWGVLHQAGALVVLGFAI. His-335 contacts heme.

Belongs to the COX15/CtaA family. Type 2 subfamily. As to quaternary structure, interacts with CtaB. Heme b serves as cofactor.

It localises to the cell membrane. The enzyme catalyses Fe(II)-heme o + 2 A + H2O = Fe(II)-heme a + 2 AH2. It functions in the pathway porphyrin-containing compound metabolism; heme A biosynthesis; heme A from heme O: step 1/1. Catalyzes the conversion of heme O to heme A by two successive hydroxylations of the methyl group at C8. The first hydroxylation forms heme I, the second hydroxylation results in an unstable dihydroxymethyl group, which spontaneously dehydrates, resulting in the formyl group of heme A. The sequence is that of Heme A synthase from Sinorhizobium fredii (strain NBRC 101917 / NGR234).